A 243-amino-acid chain; its full sequence is Probable fructoselysine utilization operon transcriptional repressor (243 aa).

Positions 10-78 (QLLYATVRQR…QGKGTFVQSQ (69 aa)) constitute an HTH gntR-type domain. The segment at residues 38–57 (ENELCTQYNVSRITIRKAIS) is a DNA-binding region (H-T-H motif).

It participates in carbohydrate metabolism; fructoselysine degradation [regulation]. Its function is as follows. May regulate the transcription of the frlABCDR operon, involved in the utilization of fructoselysine and psicoselysine. The sequence is that of Probable fructoselysine utilization operon transcriptional repressor (frlR) from Escherichia coli O157:H7.